The chain runs to 602 residues: Elongation factor 4 (602 aa).

Positions 7 to 189 constitute a tr-type G domain; that stretch reads KFIRNFSIIA…QLVVAIPPPV (183 aa). GTP-binding positions include 19–24 and 136–139; these read DHGKST and NKID.

The protein belongs to the TRAFAC class translation factor GTPase superfamily. Classic translation factor GTPase family. LepA subfamily.

Its subcellular location is the cell inner membrane. It carries out the reaction GTP + H2O = GDP + phosphate + H(+). Functionally, required for accurate and efficient protein synthesis under certain stress conditions. May act as a fidelity factor of the translation reaction, by catalyzing a one-codon backward translocation of tRNAs on improperly translocated ribosomes. Back-translocation proceeds from a post-translocation (POST) complex to a pre-translocation (PRE) complex, thus giving elongation factor G a second chance to translocate the tRNAs correctly. Binds to ribosomes in a GTP-dependent manner. This chain is Elongation factor 4, found in Coxiella burnetii (strain RSA 493 / Nine Mile phase I).